Reading from the N-terminus, the 369-residue chain is Protein RIC-3 (369 aa).

Positions 1–28 (MAYSTVQRVALASGLVLALSLLLPKAFL) are cleaved as a signal peptide. Residues 29 to 95 (SRGKRQEPPP…AGGGGSGRGL (67 aa)) lie on the Lumenal side of the membrane. Residues 30–67 (RGKRQEPPPTPEGKLGRFPPMMHHHQAPSDGQTPGARF) form a disordered region. The helical transmembrane segment at 96–116 (MGQIIPIYGFGIFLYILYILF) threads the bilayer. At 117–369 (KLSKGKTTAE…LRKRNPQGLE (253 aa)) the chain is on the cytoplasmic side. The stretch at 140 to 169 (RKITSFELAQLQEKLKETEAAMEKLINRVG) forms a coiled coil. Residue K202 is modified to N6-acetyllysine; alternate. Residue K202 forms a Glycyl lysine isopeptide (Lys-Gly) (interchain with G-Cter in ubiquitin); alternate linkage. Disordered regions lie at residues 272 to 295 (ESDH…SVTS) and 316 to 369 (LAEN…QGLE). Positions 332 to 346 (ETTKEEWSQDFKDEG) are enriched in basic and acidic residues. Residues 360–369 (LRKRNPQGLE) show a composition bias toward basic residues.

This sequence belongs to the ric-3 family. In terms of assembly, monomer and homodimer. Interacts with CHRNA7, CHRNA3, CHRNA4, CHRNB2, CHRNB4 and HTR3A. As to expression, broadly expressed, with high levels in muscle, brain, heart, pancreas and testis. In the central nervous system, highest levels are detected in the cerebellum and pituitary gland. Over-expressed in brains from patients with bipolar disease or schizophrenia. Isoform 5 is predominantly expressed in the brain.

It is found in the endoplasmic reticulum membrane. It localises to the golgi apparatus membrane. Molecular chaperone which facilitates proper subunit assembly and surface trafficking of alpha-7 (CHRNA7) and alpha-8 (CHRNA8) nicotinic acetylcholine receptors. May also promote functional expression of homomeric serotoninergic 5-HT3 receptors, and of heteromeric acetylcholine receptors alpha-3/beta-2, alpha-3/beta-4, alpha-4/beta-2 and alpha-4/beta-4. In Homo sapiens (Human), this protein is Protein RIC-3 (RIC3).